The primary structure comprises 211 residues: Thiamine-phosphate synthase (211 aa).

Residues glutamine 37–lysine 41 and asparagine 69 each bind 4-amino-2-methyl-5-(diphosphooxymethyl)pyrimidine. The Mg(2+) site is built by aspartate 70 and aspartate 89. 4-amino-2-methyl-5-(diphosphooxymethyl)pyrimidine is bound at residue serine 108. 2-[(2R,5Z)-2-carboxy-4-methylthiazol-5(2H)-ylidene]ethyl phosphate is bound at residue threonine 134–threonine 136. Lysine 137 serves as a coordination point for 4-amino-2-methyl-5-(diphosphooxymethyl)pyrimidine. 2-[(2R,5Z)-2-carboxy-4-methylthiazol-5(2H)-ylidene]ethyl phosphate contacts are provided by residues glycine 166 and valine 186–serine 187.

This sequence belongs to the thiamine-phosphate synthase family. Mg(2+) serves as cofactor.

It catalyses the reaction 2-[(2R,5Z)-2-carboxy-4-methylthiazol-5(2H)-ylidene]ethyl phosphate + 4-amino-2-methyl-5-(diphosphooxymethyl)pyrimidine + 2 H(+) = thiamine phosphate + CO2 + diphosphate. It carries out the reaction 2-(2-carboxy-4-methylthiazol-5-yl)ethyl phosphate + 4-amino-2-methyl-5-(diphosphooxymethyl)pyrimidine + 2 H(+) = thiamine phosphate + CO2 + diphosphate. The enzyme catalyses 4-methyl-5-(2-phosphooxyethyl)-thiazole + 4-amino-2-methyl-5-(diphosphooxymethyl)pyrimidine + H(+) = thiamine phosphate + diphosphate. The protein operates within cofactor biosynthesis; thiamine diphosphate biosynthesis; thiamine phosphate from 4-amino-2-methyl-5-diphosphomethylpyrimidine and 4-methyl-5-(2-phosphoethyl)-thiazole: step 1/1. Its function is as follows. Condenses 4-methyl-5-(beta-hydroxyethyl)thiazole monophosphate (THZ-P) and 2-methyl-4-amino-5-hydroxymethyl pyrimidine pyrophosphate (HMP-PP) to form thiamine monophosphate (TMP). The sequence is that of Thiamine-phosphate synthase from Shigella dysenteriae serotype 1 (strain Sd197).